The sequence spans 377 residues: N-acetyldiaminopimelate deacetylase (377 aa).

Residue aspartate 69 is part of the active site. Glutamate 128 (proton acceptor) is an active-site residue.

Belongs to the peptidase M20A family. N-acetyldiaminopimelate deacetylase subfamily.

The enzyme catalyses N-acetyl-(2S,6S)-2,6-diaminopimelate + H2O = (2S,6S)-2,6-diaminopimelate + acetate. Its pathway is amino-acid biosynthesis; L-lysine biosynthesis via DAP pathway; LL-2,6-diaminopimelate from (S)-tetrahydrodipicolinate (acetylase route): step 3/3. In terms of biological role, catalyzes the conversion of N-acetyl-diaminopimelate to diaminopimelate and acetate. The protein is N-acetyldiaminopimelate deacetylase of Streptococcus sanguinis (strain SK36).